A 368-amino-acid polypeptide reads, in one-letter code: tRNA(Met) cytidine acetate ligase (368 aa).

ATP contacts are provided by residues Ile7–Leu20, Gly96, Asn152, and Arg175.

The protein belongs to the TmcAL family.

The protein localises to the cytoplasm. The catalysed reaction is cytidine(34) in elongator tRNA(Met) + acetate + ATP = N(4)-acetylcytidine(34) in elongator tRNA(Met) + AMP + diphosphate. In terms of biological role, catalyzes the formation of N(4)-acetylcytidine (ac(4)C) at the wobble position of elongator tRNA(Met), using acetate and ATP as substrates. First activates an acetate ion to form acetyladenylate (Ac-AMP) and then transfers the acetyl group to tRNA to form ac(4)C34. The protein is tRNA(Met) cytidine acetate ligase of Streptococcus pyogenes serotype M4 (strain MGAS10750).